A 928-amino-acid chain; its full sequence is MYCBP-associated protein (928 aa).

2 disordered regions span residues 1–38 and 164–183; these read MKKA…PVSN and EEPK…APPL. Over residues 164–177 the composition is skewed to basic and acidic residues; the sequence is EEPKPKSPKEEKRP. Position 557 is a phosphoserine (Ser557). At Thr558 the chain carries Phosphothreonine. Ser564 is modified (phosphoserine). The disordered stretch occupies residues 786 to 881; the sequence is IPDEGQKSPP…SSATSQEPID (96 aa). Over residues 806 to 865 the composition is skewed to basic and acidic residues; that stretch reads LGKEDRRGGAQEKKQLSARDKEEKKGSKTPSKEDRLNSKKQKAKDDKKVVKSTSRDRLLS.

In terms of assembly, interacts with MYCBP. Expressed in brain, retina, testis, heart and lung. Not detected in liver, kidney or intestine. In brain, highly abundant in CNS neurons of the hippocampus and cerebellum. Strongly expressed in cochlea and vestibular sensory epithelia. In both the organ of Corti and the vestibular organ, expression is restricted to hair cells.

It localises to the cytoplasm. The protein resides in the membrane. In terms of biological role, may play a role in spermatogenesis. May be involved in synaptic processes. This chain is MYCBP-associated protein, found in Rattus norvegicus (Rat).